Here is a 455-residue protein sequence, read N- to C-terminus: Post-transcriptional regulator MTA (455 aa).

Residues 17–163 (DSVSSSEFDE…QVNCQRQDDD (147 aa)) are disordered. Residues 23–42 (EFDESRDDETDAPTLEDEQL) are compositionally biased toward acidic residues. Over residues 88–98 (SPLSRPRSPSP) the composition is skewed to low complexity. 3 consecutive short sequence motifs (nuclear localization signal) follow at residues 101–107 (RYGKKIK), 121–130 (KRPRRRPRDR), and 143–152 (RAAPKRATRR). Residues Cys-333, His-423, Cys-427, and Cys-432 each contribute to the Zn(2+) site. The segment at 333-432 (CVFDKQSELA…HHSLCRNSEC (100 aa)) adopts a CHC2-type zinc-finger fold.

This sequence belongs to the HHV-1 ICP27 protein family. Homodimer. Homodimerization is required for transactivation. Interacts with host ALYREF. Associates in a complex with RNA, and host export factors NXF1/TAP and ALYREF; these interactions allow nuclear export of viral transcripts. Interacts with protein K-bZIP/K8; this interaction promotes viral gene expression during lytic infection. Interacts with host PABPC1. Interacts with host AGO2 and TNRC6A; these interactions inhibit host P-body formation. Interacts with PRKRA and EIF2AK2/PKR; these interactions inhibit host stress granule formation. Proteolytically cleaved by host caspase-7 (CASP7), leading to its inactivation, thereby preventing expression of viral lytic genes.

It localises to the host cytoplasm. Its subcellular location is the host nucleus. Post-transcriptional regulator that plays an essential role in the expression of viral lytic genes and productive viral replication. Possesses numerous activities that promote the expression of viral genes including enhancement of RNA stability, promotion of RNA splicing and stimulation of protein translation often via its ability to interact with different cellular cofactors. Stabilizes polyadenylated nuclear (PAN) RNA by cooperative binding to a 9-nt core of the MRE (MTA responsive element) together with host PABPC1. Functions as a viral splicing factor and promotes expression of intron-containing viral lytic genes. Protects viral transcripts from specific nuclear RNA decay pathways by preventing host MTREX recruitment that promotes unwinding and degradation of structured RNA substrates. Plays a role in the inhibition of host P-body formation by altering the scaffolding activity of TNRC6A at the initial stage thereby enhancing virus production. Also inhibits host stress granule formation by blocking autophosphorylation of EIF2AK2/PKR and its subsequent binding to dsRNA. In Human herpesvirus 8 type P (isolate GK18) (HHV-8), this protein is Post-transcriptional regulator MTA.